The following is a 387-amino-acid chain: Ferrochelatase (387 aa).

His-196 and Glu-277 together coordinate Fe cation.

This sequence belongs to the ferrochelatase family.

It is found in the cytoplasm. It carries out the reaction heme b + 2 H(+) = protoporphyrin IX + Fe(2+). Its pathway is porphyrin-containing compound metabolism; protoheme biosynthesis; protoheme from protoporphyrin-IX: step 1/1. Catalyzes the ferrous insertion into protoporphyrin IX. This is Ferrochelatase from Synechococcus elongatus (strain ATCC 33912 / PCC 7942 / FACHB-805) (Anacystis nidulans R2).